The primary structure comprises 741 residues: Phage T7 exclusion protein (741 aa).

The 308-residue stretch at 27 to 334 folds into the KAP NTPase domain; it reads FGNIAENISR…NSLIFLYPGM (308 aa).

In terms of biological role, responsible for the exclusion of phage T7 by plasmid F. Growth of bacteriophage T7 is inhibited in cells of E.coli that carries the plasmid F. The protein is Phage T7 exclusion protein (pifA) of Escherichia coli (strain K12).